We begin with the raw amino-acid sequence, 307 residues long: Nicotinamide/nicotinic acid mononucleotide adenylyltransferase 2 (307 aa).

Positions 16 and 17 each coordinate NAD(+). Residue His24 coordinates ATP. NAD(+)-binding residues include Trp92 and Thr95. Residues Cys164 and Cys165 are each lipidated (S-palmitoyl cysteine). NAD(+) is bound by residues Gly200, Asp202, Leu212, Trp213, and Arg232. Residue 271–274 (TKSR) coordinates ATP.

This sequence belongs to the eukaryotic NMN adenylyltransferase family. Monomer. Mg(2+) is required as a cofactor. Degraded in response to injured neurite. Degradation is caused by polyubiquitination by MYCBP2 after recognition by FBXO45. In terms of processing, palmitoylated; palmitoylation is required for membrane association.

Its subcellular location is the golgi apparatus membrane. It localises to the cytoplasmic vesicle membrane. The protein resides in the cytoplasm. The protein localises to the cell projection. It is found in the axon. The catalysed reaction is beta-nicotinamide D-ribonucleotide + ATP + H(+) = diphosphate + NAD(+). It catalyses the reaction nicotinate beta-D-ribonucleotide + ATP + H(+) = deamido-NAD(+) + diphosphate. It functions in the pathway cofactor biosynthesis; NAD(+) biosynthesis; NAD(+) from nicotinamide D-ribonucleotide: step 1/1. It participates in cofactor biosynthesis; NAD(+) biosynthesis; deamido-NAD(+) from nicotinate D-ribonucleotide: step 1/1. Inhibited by P1-(adenosine-5')-P3-(nicotinamide-riboside-5')-triphosphate (Np3AD) and P1-(adenosine-5')-P4-(nicotinamide-riboside-5')-tetraphosphate (Np4AD). In terms of biological role, nicotinamide/nicotinate-nucleotide adenylyltransferase that acts as an axon maintenance factor. Axon survival factor required for the maintenance of healthy axons: acts by delaying Wallerian axon degeneration, an evolutionarily conserved process that drives the loss of damaged axons. Catalyzes the formation of NAD(+) from nicotinamide mononucleotide (NMN) and ATP. Can also use the deamidated form; nicotinic acid mononucleotide (NaMN) as substrate but with a lower efficiency. Cannot use triazofurin monophosphate (TrMP) as substrate. Also catalyzes the reverse reaction, i.e. the pyrophosphorolytic cleavage of NAD(+). For the pyrophosphorolytic activity prefers NAD(+), NADH and NaAD as substrates and degrades nicotinic acid adenine dinucleotide phosphate (NHD) less effectively. Fails to cleave phosphorylated dinucleotides NADP(+), NADPH and NaADP(+). Also acts as an activator of ADP-ribosylation by supporting the catalytic activity of PARP16 and promoting mono-ADP-ribosylation of ribosomes by PARP16. May be involved in the maintenance of axonal integrity. This is Nicotinamide/nicotinic acid mononucleotide adenylyltransferase 2 (NMNAT2) from Pongo abelii (Sumatran orangutan).